The chain runs to 166 residues: Nascent polypeptide-associated complex subunit beta (166 aa).

2 disordered regions span residues 1 to 40 (MVLN…EDPK) and 129 to 166 (HAAS…DKLD). In terms of domain architecture, NAC-A/B spans 35–100 (GGEDPKLQAA…GVDKELTELV (66 aa)). Over residues 141-153 (DDDDVPDVVENFD) the composition is skewed to acidic residues. Basic and acidic residues predominate over residues 154–166 (EADKKETEVDKLD).

It belongs to the NAC-beta family. In terms of assembly, part of the nascent polypeptide-associated complex (NAC), consisting of EGD2 and EGD1. NAC associates with ribosomes via EGD1.

The protein resides in the cytoplasm. Its subcellular location is the nucleus. Component of the nascent polypeptide-associated complex (NAC), a dynamic component of the ribosomal exit tunnel, protecting the emerging polypeptides from interaction with other cytoplasmic proteins to ensure appropriate nascent protein targeting. The NAC complex also promotes mitochondrial protein import by enhancing productive ribosome interactions with the outer mitochondrial membrane and blocks the inappropriate interaction of ribosomes translating non-secretory nascent polypeptides with translocation sites in the membrane of the endoplasmic reticulum. EGD1 may act as a transcription factor that exert a negative effect on the expression of several genes that are transcribed by RNA polymerase II. This is Nascent polypeptide-associated complex subunit beta (EGD1) from Mycosarcoma maydis (Corn smut fungus).